The sequence spans 229 residues: Potassium/proton antiporter CemA (229 aa).

The next 4 helical transmembrane spans lie at 7–27 (FTPL…SLSF), 114–134 (IICF…LVIL), 154–174 (ILLV…ELMI), and 189–209 (IISG…KYWI).

Belongs to the CemA family.

The protein resides in the plastid. Its subcellular location is the chloroplast inner membrane. It carries out the reaction K(+)(in) + H(+)(out) = K(+)(out) + H(+)(in). In terms of biological role, contributes to K(+)/H(+) antiport activity by supporting proton efflux to control proton extrusion and homeostasis in chloroplasts in a light-dependent manner to modulate photosynthesis. Prevents excessive induction of non-photochemical quenching (NPQ) under continuous-light conditions. Indirectly promotes efficient inorganic carbon uptake into chloroplasts. The sequence is that of Potassium/proton antiporter CemA from Acorus calamus var. americanus (American sweet flag).